We begin with the raw amino-acid sequence, 378 residues long: AA13 family lytic polysaccharide monooxygenase A (378 aa).

Positions 1 to 17 (MKWSVIQALALASGVQA) are cleaved as a signal peptide. A Cu(2+)-binding site is contributed by His18. His18 is modified (methylhistidine). One can recognise a Chitin-binding type-4 domain in the interval 18–244 (HGYLTFPMSR…PQIYLTCADI (227 aa)). 7 cysteine pairs are disulfide-bonded: Cys39–Cys42, Cys65–Cys241, Cys101–Cys199, Cys117–Cys144, Cys152–Cys160, Cys166–Cys172, and Cys180–Cys188. Residue His108 participates in Cu(2+) binding. N-linked (GlcNAc...) asparagine glycosylation occurs at Asn221. Tyr238 contributes to the Cu(2+) binding site. The span at 250–263 (DSQSPPTTTTTSTP) shows a compositional bias: low complexity. A disordered region spans residues 250–272 (DSQSPPTTTTTSTPASPPPTSCA). The CBM20 domain maps to 272-378 (ATPAASVAVT…GTATVDTAWK (107 aa)).

This sequence belongs to the polysaccharide monooxygenase AA13 family. Requires Cu(2+) as cofactor. O-mannosylated.

It localises to the secreted. The enzyme catalyses starch + reduced acceptor + O2 = D-glucono-1,5-lactone-terminated malto-oligosaccharides + short-chain malto-oligosaccharides + acceptor + H2O.. Activity is inhibited by both beta-cyclodextrin or amylose that block the access to the active site. Functionally, starch-active lytic polysaccharide monooxygenase that oxidizes the C1 position of starch substrates. Catalysis by LPMOs requires the reduction of the active-site copper from Cu(II) to Cu(I) by a reducing agent and H(2)O(2) or O(2) as a cosubstrate. The sequence is that of AA13 family lytic polysaccharide monooxygenase A from Pyricularia oryzae (strain 70-15 / ATCC MYA-4617 / FGSC 8958) (Rice blast fungus).